Here is a 65-residue protein sequence, read N- to C-terminus: Myotoxin-1 (65 aa).

The first 22 residues, M1–A22, serve as a signal peptide directing secretion. Cystine bridges form between C26–C58, C33–C52, and C40–C59.

It belongs to the crotamine-myotoxin family. Monomer. Expressed by the venom gland.

Its subcellular location is the secreted. Cationic peptide that possesses multiple functions. It acts as a cell-penetrating peptide (CPP), and as a potent voltage-gated potassium channel (Kv) inhibitor. It exhibits antimicrobial activities, hind limb paralysis, and severe muscle necrosis by a non-enzymatic mechanism. In Crotalus durissus terrificus (South American rattlesnake), this protein is Myotoxin-1.